The following is a 612-amino-acid chain: ETS-related transcription factor Elf-1 (612 aa).

Phosphoserine is present on residues Ser110, Ser163, Ser167, and Ser168. The segment covering 156–169 has biased composition (polar residues); sequence VQETNADSPGASSP. Residues 156–199 are disordered; sequence VQETNADSPGASSPEQRKRKKGRKTKPPRPDSPTTTPNISVKKK. Over residues 172–182 the composition is skewed to basic residues; it reads RKRKKGRKTKP. A Phosphoserine modification is found at Ser187. Position 190 is a phosphothreonine (Thr190). A DNA-binding region (ETS) is located at residues 208–290; sequence IYLWEFLLAL…EGQRLVYQFK (83 aa). The disordered stretch occupies residues 300-361; that stretch reads DDEDPSSSIE…AANPKDPVEV (62 aa). Over residues 305-322 the composition is skewed to low complexity; it reads SSSIESSDQSLSSTTASS. Residues 323–335 show a composition bias toward polar residues; it reads RNQANRSRVSSSP. Position 431 is a phosphoserine (Ser431). Basic and acidic residues predominate over residues 562-577; that stretch reads EVEKKAEDDLNEDAEK. Residues 562 to 586 are disordered; sequence EVEKKAEDDLNEDAEKSAQQPQPYV.

It belongs to the ETS family. Binds to the underphosphorylated form of RB. May interact with other transcription factors in order to regulate specific genes. Interacts with RUNX1. Interacts with SP1; the interaction is inhibited by glycosylation of SP1. In terms of tissue distribution, predominantly found in hematopoietic cells. Detected in other cell types such as fibroblasts.

It localises to the nucleus. Functionally, transcription factor that activates the LYN and BLK promoters. The chain is ETS-related transcription factor Elf-1 (Elf1) from Mus musculus (Mouse).